The chain runs to 253 residues: Geranylgeranylglyceryl phosphate synthase (253 aa).

Asp-23 and Ser-52 together coordinate Mg(2+). Sn-glycerol 1-phosphate is bound by residues Tyr-171–Gly-177, Gly-202–Gly-203, and Gly-224–Thr-225.

The protein belongs to the GGGP/HepGP synthase family. Group II subfamily. As to quaternary structure, homodimer. Requires Mg(2+) as cofactor.

It localises to the cytoplasm. It catalyses the reaction sn-glycerol 1-phosphate + (2E,6E,10E)-geranylgeranyl diphosphate = sn-3-O-(geranylgeranyl)glycerol 1-phosphate + diphosphate. Its pathway is membrane lipid metabolism; glycerophospholipid metabolism. With respect to regulation, inhibited by high concentrations of magnesium (&gt;10 mM) and by EDTA in vitro. Prenyltransferase that catalyzes the transfer of the geranylgeranyl moiety of geranylgeranyl diphosphate (GGPP) to the C3 hydroxyl of sn-glycerol-1-phosphate (G1P). This reaction is the first ether-bond-formation step in the biosynthesis of archaeal membrane lipids. Cannot use sn-glycerol-3-phosphate (G3P) as substrate. This chain is Geranylgeranylglyceryl phosphate synthase, found in Thermoplasma acidophilum (strain ATCC 25905 / DSM 1728 / JCM 9062 / NBRC 15155 / AMRC-C165).